The following is a 592-amino-acid chain: Inactive glycosyltransferase 25 family member 3 (592 aa).

A signal peptide spans 1–19 (MHVARLLPLLLLLGQQLRA). N-linked (GlcNAc...) asparagine glycosylation is found at Asn72, Asn150, Asn234, and Asn357. The tract at residues 540 to 592 (AEWLSDTETSSPWDDDSGRLISQTGSQKALRGPHLHLTGSSGHSLHPHHRDEL) is disordered. Residues 589-592 (RDEL) carry the Prevents secretion from ER motif.

It belongs to the glycosyltransferase 25 family.

It localises to the endoplasmic reticulum lumen. Functionally, probable cell adhesion protein involved in leukocyte transmigration across the blood-brain barrier. Does not express any beta-galactosyltransferase activity in vitro. The chain is Inactive glycosyltransferase 25 family member 3 (Cercam) from Mus musculus (Mouse).